Consider the following 91-residue polypeptide: Large ribosomal subunit protein bL27 (91 aa).

The interval 1 to 22 (MAHKKAGGSSRNGRDSDGRRLG) is disordered.

It belongs to the bacterial ribosomal protein bL27 family.

The chain is Large ribosomal subunit protein bL27 from Beijerinckia indica subsp. indica (strain ATCC 9039 / DSM 1715 / NCIMB 8712).